The primary structure comprises 210 residues: Thymidylate kinase (210 aa).

Position 10-17 (10-17 (GPEGAGKS)) interacts with ATP.

It belongs to the thymidylate kinase family.

The catalysed reaction is dTMP + ATP = dTDP + ADP. Phosphorylation of dTMP to form dTDP in both de novo and salvage pathways of dTTP synthesis. This Pseudomonas fluorescens (strain ATCC BAA-477 / NRRL B-23932 / Pf-5) protein is Thymidylate kinase.